The following is a 113-amino-acid chain: uncharacterized protein (113 aa).

The HTH cro/C1-type domain maps to 16–70 (LYEYLEPLDLKINELAELLHVHRNSVSALINNNRKLTTEMAFRLAKVFDTTVDFW). The H-T-H motif DNA-binding region spans 27-46 (INELAELLHVHRNSVSALIN).

The protein belongs to the VapA/VapI family.

This is an uncharacterized protein from Escherichia coli O6:H1 (strain CFT073 / ATCC 700928 / UPEC).